Consider the following 207-residue polypeptide: N-(5'-phosphoribosyl)anthranilate isomerase (207 aa).

The protein belongs to the TrpF family.

The catalysed reaction is N-(5-phospho-beta-D-ribosyl)anthranilate = 1-(2-carboxyphenylamino)-1-deoxy-D-ribulose 5-phosphate. It participates in amino-acid biosynthesis; L-tryptophan biosynthesis; L-tryptophan from chorismate: step 3/5. This is N-(5'-phosphoribosyl)anthranilate isomerase from Legionella pneumophila (strain Lens).